The following is a 456-amino-acid chain: Exodeoxyribonuclease 7 large subunit (456 aa).

Belongs to the XseA family. Heterooligomer composed of large and small subunits.

The protein resides in the cytoplasm. It carries out the reaction Exonucleolytic cleavage in either 5'- to 3'- or 3'- to 5'-direction to yield nucleoside 5'-phosphates.. Its function is as follows. Bidirectionally degrades single-stranded DNA into large acid-insoluble oligonucleotides, which are then degraded further into small acid-soluble oligonucleotides. The chain is Exodeoxyribonuclease 7 large subunit from Escherichia coli (strain ATCC 8739 / DSM 1576 / NBRC 3972 / NCIMB 8545 / WDCM 00012 / Crooks).